Reading from the N-terminus, the 361-residue chain is Chorismate synthase (361 aa).

Position 47 (Arg-47) interacts with NADP(+). FMN is bound by residues 124–126 (RAS), Gly-286, 301–305 (KPTAT), and Arg-327.

It belongs to the chorismate synthase family. In terms of assembly, homotetramer. Requires FMNH2 as cofactor.

It catalyses the reaction 5-O-(1-carboxyvinyl)-3-phosphoshikimate = chorismate + phosphate. Its pathway is metabolic intermediate biosynthesis; chorismate biosynthesis; chorismate from D-erythrose 4-phosphate and phosphoenolpyruvate: step 7/7. In terms of biological role, catalyzes the anti-1,4-elimination of the C-3 phosphate and the C-6 proR hydrogen from 5-enolpyruvylshikimate-3-phosphate (EPSP) to yield chorismate, which is the branch point compound that serves as the starting substrate for the three terminal pathways of aromatic amino acid biosynthesis. This reaction introduces a second double bond into the aromatic ring system. The chain is Chorismate synthase from Akkermansia muciniphila (strain ATCC BAA-835 / DSM 22959 / JCM 33894 / BCRC 81048 / CCUG 64013 / CIP 107961 / Muc).